A 102-amino-acid chain; its full sequence is MQSQKIRIRLKAFDYRLIDKSALEIVETAKRTGAVVKGPVPLPTRIERFDVLRSPHVNKTSRDQFEIRTHLRLMDIMDPTDKTVDALMKLDLPAGVDVEIKL.

Belongs to the universal ribosomal protein uS10 family. As to quaternary structure, part of the 30S ribosomal subunit.

Involved in the binding of tRNA to the ribosomes. The sequence is that of Small ribosomal subunit protein uS10 from Nitrosospira multiformis (strain ATCC 25196 / NCIMB 11849 / C 71).